The following is a 408-amino-acid chain: Succinylornithine transaminase (408 aa).

K252 carries the N6-(pyridoxal phosphate)lysine modification.

The protein belongs to the class-III pyridoxal-phosphate-dependent aminotransferase family. AstC subfamily. It depends on pyridoxal 5'-phosphate as a cofactor.

The catalysed reaction is N(2)-succinyl-L-ornithine + 2-oxoglutarate = N-succinyl-L-glutamate 5-semialdehyde + L-glutamate. It participates in amino-acid degradation; L-arginine degradation via AST pathway; L-glutamate and succinate from L-arginine: step 3/5. In terms of biological role, catalyzes the transamination of N(2)-succinylornithine and alpha-ketoglutarate into N(2)-succinylglutamate semialdehyde and glutamate. Can also act as an acetylornithine aminotransferase. The protein is Succinylornithine transaminase of Salmonella choleraesuis (strain SC-B67).